The chain runs to 168 residues: Alpha-amylase/trypsin inhibitor CM3 (168 aa).

Residues Met1–Ala25 form the signal peptide.

It belongs to the protease inhibitor I6 (cereal trypsin/alpha-amylase inhibitor) family. In terms of assembly, subunit of the tetrameric inhibitor. In terms of processing, five disulfide bonds, which are essential for the inhibitor activity, are probably present. Developing endosperm.

It localises to the secreted. Functionally, alpha-amylase/trypsin inhibitor. It could be involved in insect defense mechanisms. This is Alpha-amylase/trypsin inhibitor CM3 from Triticum aestivum (Wheat).